The chain runs to 398 residues: Alpha-(1,3)-fucosyltransferase 4 (398 aa).

The Cytoplasmic portion of the chain corresponds to 1–15 (MRARWGRRGARRGGP). A helical; Signal-anchor for type II membrane protein membrane pass occupies residues 16–40 (GLPGTHLALLAASLLSSSVAIYVCW). Residues 41 to 398 (KQLPPLPWAS…VPNLAGWFQQ (358 aa)) lie on the Lumenal side of the membrane. Residues N84, N183, and N311 are each glycosylated (N-linked (GlcNAc...) asparagine).

This sequence belongs to the glycosyltransferase 10 family.

Its subcellular location is the golgi apparatus. It localises to the golgi stack membrane. It carries out the reaction a beta-D-galactosyl-(1-&gt;4)-N-acetyl-beta-D-glucosaminyl derivative + GDP-beta-L-fucose = a beta-D-galactosyl-(1-&gt;4)-[alpha-L-fucosyl-(1-&gt;3)]-N-acetyl-beta-D-glucosaminyl derivative + GDP + H(+). It catalyses the reaction an N-acetyl-alpha-neuraminyl-(2-&gt;3)-beta-D-galactosyl-(1-&gt;4)-N-acetyl-beta-D-glucosaminyl derivative + GDP-beta-L-fucose = an alpha-Neu5Ac-(2-&gt;3)-beta-D-Gal-(1-&gt;4)-[alpha-L-Fuc-(1-&gt;3)]-beta-D-GlcNAc derivative + GDP + H(+). The enzyme catalyses an alpha-Neu5Ac-(2-&gt;3)-beta-D-Gal-(1-&gt;4)-beta-D-GlcNAc-(1-&gt;3)-beta-D-Gal-(1-&gt;4)-beta-D-GlcNAc derivative + GDP-beta-L-fucose = an alpha-Neu5Ac-(2-&gt;3)-beta-D-Gal-(1-&gt;4)-beta-D-GlcNAc-(1-&gt;3)-beta-D-Gal-(1-&gt;4)-[alpha-L-Fuc-(1-&gt;3)]-beta-D-GlcNAc derivative + GDP + H(+). The catalysed reaction is an alpha-Neu5Ac-(2-&gt;3)-beta-D-Gal-(1-&gt;4)-beta-D-GlcNAc6S derivative + GDP-beta-L-fucose = an alpha-Neu5Ac-(2-&gt;3)-beta-D-Gal-(1-&gt;4)-[alpha-L-Fuc-(1-&gt;3)]-beta-D-GlcNAc6S derivative + GDP + H(+). It participates in protein modification; protein glycosylation. Catalyzes alpha(1-&gt;3) linkage of fucosyl moiety transferred from GDP-beta-L-fucose to N-acetyl glucosamine (GlcNAc) within type 2 lactosamine (LacNAc, Gal-beta(1-&gt;4)GlcNAc) glycan attached to N- or O-linked glycoproteins. Robustly fucosylates nonsialylated distal LacNAc unit of the polylactosamine chain to form Lewis X antigen (CD15), a glycan determinant known to mediate important cellular functions in development and immunity. Fucosylates with lower efficiency sialylated LacNAc acceptors to form sialyl Lewis X and 6-sulfo sialyl Lewis X determinants that serve as recognition epitopes for C-type lectins. Together with FUT7 contributes to SELE, SELL and SELP selectin ligand biosynthesis and selectin-dependent lymphocyte homing, leukocyte migration and blood leukocyte homeostasis. In a cell type specific manner, may also fucosylate the internal LacNAc unit of the polylactosamine chain to form VIM-2 antigen that serves as recognition epitope for SELE. The chain is Alpha-(1,3)-fucosyltransferase 4 (FUT4) from Bos taurus (Bovine).